Reading from the N-terminus, the 189-residue chain is NADH-quinone oxidoreductase subunit B (189 aa).

Positions 39, 40, 104, and 135 each coordinate [4Fe-4S] cluster.

It belongs to the complex I 20 kDa subunit family. In terms of assembly, NDH-1 is composed of 14 different subunits. Subunits NuoB, C, D, E, F, and G constitute the peripheral sector of the complex. [4Fe-4S] cluster serves as cofactor.

It is found in the cell inner membrane. The catalysed reaction is a quinone + NADH + 5 H(+)(in) = a quinol + NAD(+) + 4 H(+)(out). NDH-1 shuttles electrons from NADH, via FMN and iron-sulfur (Fe-S) centers, to quinones in the respiratory chain. The immediate electron acceptor for the enzyme in this species is believed to be a menaquinone. Couples the redox reaction to proton translocation (for every two electrons transferred, four hydrogen ions are translocated across the cytoplasmic membrane), and thus conserves the redox energy in a proton gradient. The protein is NADH-quinone oxidoreductase subunit B of Pelodictyon phaeoclathratiforme (strain DSM 5477 / BU-1).